The chain runs to 208 residues: Ubiquitin-conjugating enzyme E2 S (208 aa).

Residues 14–160 form the UBC core domain; that stretch reads QTIRQVMREL…ARMMTEIHAQ (147 aa). The active-site Glycyl thioester intermediate is Cys98. A disordered region spans residues 159–208; sequence AQPAKCASTTSDAKDDDGPSTKKHAGLDKKLQDKKKEKLLKEKKRMLKRL. The segment covering 170–198 has biased composition (basic and acidic residues); it reads DAKDDDGPSTKKHAGLDKKLQDKKKEKLL. Basic residues predominate over residues 199 to 208; that stretch reads KEKKRMLKRL.

Belongs to the ubiquitin-conjugating enzyme family.

It catalyses the reaction S-ubiquitinyl-[E1 ubiquitin-activating enzyme]-L-cysteine + [E2 ubiquitin-conjugating enzyme]-L-cysteine = [E1 ubiquitin-activating enzyme]-L-cysteine + S-ubiquitinyl-[E2 ubiquitin-conjugating enzyme]-L-cysteine.. It functions in the pathway protein modification; protein ubiquitination. Functionally, catalyzes the covalent attachment of ubiquitin to other proteins. Acts as an essential factor of the anaphase promoting complex/cyclosome (APC/C), a cell cycle-regulated ubiquitin ligase that controls progression through mitosis. Acts by specifically elongating polyubiquitin chains initiated by the E2 enzyme vih/UbcH10 on APC/C substrates, enhancing the degradation of APC/C substrates by the proteasome and promoting mitotic exit. The sequence is that of Ubiquitin-conjugating enzyme E2 S from Drosophila willistoni (Fruit fly).